We begin with the raw amino-acid sequence, 992 residues long: Disks large-associated protein 4 (992 aa).

The span at 1–20 (MKGLGDSRPRHLSDSLDPPH) shows a compositional bias: basic and acidic residues. 2 disordered regions span residues 1-31 (MKGL…DRNP) and 154-226 (APSM…ASGL). Residues 162 to 171 (GKVGGNGGKK) show a composition bias toward gly residues. Residues 172 to 194 (GVLEDGKGRRAKSKERAKAGEPK) are compositionally biased toward basic and acidic residues. A compositionally biased stretch (polar residues) spans 199–208 (SNISGWWSSD). Phosphoserine is present on residues S206 and S207. R290 carries the post-translational modification Omega-N-methylarginine. Disordered regions lie at residues 342 to 435 (TTLL…SWEE), 527 to 665 (SVSL…RKLS), 677 to 751 (VPKE…GPRQ), 763 to 798 (SYGD…AQPG), and 915 to 992 (TPEK…QTRL). Phosphoserine is present on residues S377, S380, S384, S388, S405, S415, and S421. Residues 399 to 413 (LRATQQSLGEQSNPR) show a composition bias toward polar residues. A compositionally biased stretch (low complexity) spans 528–554 (VSLQSLSPPPSTGSLSNSRTLPSSSCL). A compositionally biased stretch (polar residues) spans 576–591 (VTVQSSTESAQDTYLD). A phosphoserine mark is found at S580, S581, S609, S611, S665, and S744. Residues 600 to 620 (TSQSGLSNSSDSLDSSTRPPS) are compositionally biased toward low complexity. T915 carries the phosphothreonine modification. Composition is skewed to basic and acidic residues over residues 915–925 (TPEKRKEEKKP) and 940–958 (VSRD…EARK). Residues 969–978 (VRQNSATESA) are compositionally biased toward polar residues. S973 is subject to Phosphoserine.

It belongs to the SAPAP family. Interacts with DLG1 and DLG4/PSD-95. Expressed in brain.

The protein localises to the membrane. May play a role in the molecular organization of synapses and neuronal cell signaling. Could be an adapter protein linking ion channel to the subsynaptic cytoskeleton. May induce enrichment of PSD-95/SAP90 at the plasma membrane. The polypeptide is Disks large-associated protein 4 (Dlgap4) (Rattus norvegicus (Rat)).